The primary structure comprises 378 residues: Quinolinate synthase (378 aa).

Iminosuccinate is bound by residues His-59 and Ser-80. A [4Fe-4S] cluster-binding site is contributed by Cys-125. Iminosuccinate is bound by residues 151-153 (YAN) and Ser-168. A [4Fe-4S] cluster-binding site is contributed by Cys-212. Residues 238–240 (HPE) and Thr-255 each bind iminosuccinate. Cys-309 provides a ligand contact to [4Fe-4S] cluster.

The protein belongs to the quinolinate synthase family. Type 1 subfamily. Requires [4Fe-4S] cluster as cofactor.

It is found in the cytoplasm. It carries out the reaction iminosuccinate + dihydroxyacetone phosphate = quinolinate + phosphate + 2 H2O + H(+). Its pathway is cofactor biosynthesis; NAD(+) biosynthesis; quinolinate from iminoaspartate: step 1/1. Functionally, catalyzes the condensation of iminoaspartate with dihydroxyacetone phosphate to form quinolinate. This Burkholderia orbicola (strain MC0-3) protein is Quinolinate synthase.